The sequence spans 286 residues: Beta-lactamase Ohio-1 (286 aa).

The first 21 residues, 1–21, serve as a signal peptide directing secretion; sequence MRYFRLCIISLLATLPLRVHA. S66 functions as the Acyl-ester intermediate in the catalytic mechanism. C73 and C119 are joined by a disulfide. E164 serves as the catalytic Proton acceptor. A substrate-binding site is contributed by 230 to 232; the sequence is KTG.

It belongs to the class-A beta-lactamase family.

The enzyme catalyses a beta-lactam + H2O = a substituted beta-amino acid. In Enterobacter cloacae, this protein is Beta-lactamase Ohio-1.